The following is a 350-amino-acid chain: Glycerol-1-phosphate dehydrogenase [NAD(P)+] (350 aa).

NAD(+) contacts are provided by residues 94–98 (GKPID) and 116–119 (TVAS). Residue Asp121 participates in substrate binding. Ser125 lines the NAD(+) pocket. Asp168 lines the substrate pocket. Zn(2+)-binding residues include Asp168 and His248. His252 lines the substrate pocket. His264 contributes to the Zn(2+) binding site.

This sequence belongs to the glycerol-1-phosphate dehydrogenase family. Zn(2+) serves as cofactor.

Its subcellular location is the cytoplasm. It carries out the reaction sn-glycerol 1-phosphate + NAD(+) = dihydroxyacetone phosphate + NADH + H(+). It catalyses the reaction sn-glycerol 1-phosphate + NADP(+) = dihydroxyacetone phosphate + NADPH + H(+). It functions in the pathway membrane lipid metabolism; glycerophospholipid metabolism. Functionally, catalyzes the NAD(P)H-dependent reduction of dihydroxyacetonephosphate (DHAP or glycerone phosphate) to glycerol 1-phosphate (G1P). The G1P thus generated is used as the glycerophosphate backbone of phospholipids in the cellular membranes of Archaea. The chain is Glycerol-1-phosphate dehydrogenase [NAD(P)+] from Halorubrum lacusprofundi (strain ATCC 49239 / DSM 5036 / JCM 8891 / ACAM 34).